A 319-amino-acid polypeptide reads, in one-letter code: F-box only protein 8 (319 aa).

An F-box domain is found at 68 to 111 (FINLEMLPPELSFTILSYLNATDLCLASCVWQDLANDELLWQGL). Positions 146-276 (FNANPDEGVN…LILLSIDLTS (131 aa)) constitute an SEC7 domain.

In terms of biological role, may promote guanine-nucleotide exchange on an ARF. Promotes the activation of ARF through replacement of GDP with GTP (Potential). The chain is F-box only protein 8 (FBXO8) from Homo sapiens (Human).